The sequence spans 115 residues: Beta-2-microglobulin (115 aa).

The first 16 residues, 1 to 16 (MKIALVLLSLLALTLA), serve as a signal peptide directing secretion. The Ig-like C1-type domain occupies 22-113 (PPVVKVYTAE…GNPSKKYRLD (92 aa)).

It belongs to the beta-2-microglobulin family. As to quaternary structure, heterodimer of an alpha chain and a beta chain. Beta-2-microglobulin is the beta-chain of major histocompatibility complex class I molecules.

Its subcellular location is the secreted. Its function is as follows. Component of the class I major histocompatibility complex (MHC). Involved in the presentation of peptide antigens to the immune system. This chain is Beta-2-microglobulin (b2m), found in Xenopus laevis (African clawed frog).